The primary structure comprises 331 residues: 6-phosphogluconolactonase (331 aa).

K287 is modified (N6-acetyllysine).

Belongs to the cycloisomerase 2 family.

The catalysed reaction is 6-phospho-D-glucono-1,5-lactone + H2O = 6-phospho-D-gluconate + H(+). It functions in the pathway carbohydrate degradation; pentose phosphate pathway; D-ribulose 5-phosphate from D-glucose 6-phosphate (oxidative stage): step 2/3. Its function is as follows. Catalyzes the hydrolysis of 6-phosphogluconolactone to 6-phosphogluconate. The chain is 6-phosphogluconolactonase from Shigella sonnei (strain Ss046).